We begin with the raw amino-acid sequence, 206 residues long: Glycerol-3-phosphate acyltransferase (206 aa).

Helical transmembrane passes span 14-34, 67-87, 91-111, 124-144, and 148-168; these read IALAAAVIGYLFGSIPFGLIL, ATLLLDALKASAAAWIVGYFL, AAIIAGFFAFIGHLFPVWIGF, LLGVAPIMVVLFAAVWLAVAF, and YSSLSALVAMLVIPVALLILG.

This sequence belongs to the PlsY family. As to quaternary structure, probably interacts with PlsX.

It localises to the cell inner membrane. The catalysed reaction is an acyl phosphate + sn-glycerol 3-phosphate = a 1-acyl-sn-glycero-3-phosphate + phosphate. It functions in the pathway lipid metabolism; phospholipid metabolism. Functionally, catalyzes the transfer of an acyl group from acyl-phosphate (acyl-PO(4)) to glycerol-3-phosphate (G3P) to form lysophosphatidic acid (LPA). This enzyme utilizes acyl-phosphate as fatty acyl donor, but not acyl-CoA or acyl-ACP. This chain is Glycerol-3-phosphate acyltransferase, found in Rhizobium etli (strain CIAT 652).